The sequence spans 622 residues: Serine/threonine-protein kinase MAK (622 aa).

Residues 4–284 enclose the Protein kinase domain; that stretch reads YTTMKQLGDG…ASQALKHPYF (281 aa). Residues 10–18 and K33 contribute to the ATP site; that span reads LGDGTYGSV. Catalysis depends on D125, which acts as the Proton acceptor. Residue T157 is modified to Phosphothreonine; by autocatalysis. Position 159 is a phosphotyrosine; by autocatalysis (Y159). The segment at 301-371 is disordered; that stretch reads QTLHKQLQPL…QGHQKPPQTM (71 aa). Residues 336-355 show a composition bias toward polar residues; the sequence is QPKQGHQPLQTIQPPQNTVT.

This sequence belongs to the protein kinase superfamily. CMGC Ser/Thr protein kinase family. CDC2/CDKX subfamily. In terms of assembly, interacts with AR and CDK20. Found in a complex containing MAK, AR and NCOA3. Interacts with FZR1 (via WD repeats). Interacts with RP1. It depends on Mg(2+) as a cofactor. Post-translationally, autophosphorylated. Phosphorylated on serine and threonine residues. In pre- and postmeiotic male germ cells in testis. In photoreceptor cells of the retina and in the olfactory receptors, and in certain epithelia of the respiratory tract and choroid plexus (brain).

The protein localises to the nucleus. It localises to the cytoplasm. Its subcellular location is the cytoskeleton. The protein resides in the microtubule organizing center. It is found in the centrosome. The protein localises to the spindle. It localises to the midbody. Its subcellular location is the cell projection. The protein resides in the cilium. It is found in the photoreceptor outer segment. The protein localises to the photoreceptor inner segment. It carries out the reaction L-seryl-[protein] + ATP = O-phospho-L-seryl-[protein] + ADP + H(+). It catalyses the reaction L-threonyl-[protein] + ATP = O-phospho-L-threonyl-[protein] + ADP + H(+). Essential for the regulation of ciliary length and required for the long-term survival of photoreceptors. Could have an important function in sensory cells and in spermatogenesis. May participate in signaling pathways used in visual and olfactory sensory transduction. Phosphorylates FZR1 in a cell cycle-dependent manner. Plays a role in the transcriptional coactivation of AR. In Mus musculus (Mouse), this protein is Serine/threonine-protein kinase MAK (Mak).